The sequence spans 211 residues: Ion-translocating oxidoreductase complex subunit G (211 aa).

The helical transmembrane segment at 9 to 29 (GLTLAIFACATTGLVALTQYL) threads the bilayer. At Thr175 the chain carries FMN phosphoryl threonine.

The protein belongs to the RnfG family. In terms of assembly, the complex is composed of six subunits: RnfA, RnfB, RnfC, RnfD, RnfE and RnfG. It depends on FMN as a cofactor.

It is found in the cell inner membrane. Part of a membrane-bound complex that couples electron transfer with translocation of ions across the membrane. The protein is Ion-translocating oxidoreductase complex subunit G of Vibrio parahaemolyticus serotype O3:K6 (strain RIMD 2210633).